The primary structure comprises 67 residues: Large ribosomal subunit protein bL35 (67 aa).

It belongs to the bacterial ribosomal protein bL35 family.

The sequence is that of Large ribosomal subunit protein bL35 from Acidiphilium cryptum (strain JF-5).